A 144-amino-acid polypeptide reads, in one-letter code: Large ribosomal subunit protein uL15 (144 aa).

A disordered region spans residues 1–54 (MRLNTLSPAPGRVTSRKRVGRGIGSGLGKTAGRGHKGLKSRSGGTVKPGFEGGQ). The span at 21-31 (RGIGSGLGKTA) shows a compositional bias: gly residues.

This sequence belongs to the universal ribosomal protein uL15 family. In terms of assembly, part of the 50S ribosomal subunit.

Binds to the 23S rRNA. The protein is Large ribosomal subunit protein uL15 of Teredinibacter turnerae (strain ATCC 39867 / T7901).